Reading from the N-terminus, the 303-residue chain is Formylglycine-generating enzyme (303 aa).

Ca(2+) contacts are provided by N188, I189, D202, Y204, N222, V223, G225, and V227. Residues C269 and C274 each contribute to the Cu(+) site.

It belongs to the sulfatase-modifying factor family. The cofactor is Cu(+).

The enzyme catalyses L-cysteinyl-[sulfatase] + 2 a thiol + O2 = an organic disulfide + 3-oxo-L-alanyl-[sulfatase] + hydrogen sulfide + H2O + H(+). Its pathway is protein modification; sulfatase oxidation. Oxidase that catalyzes the conversion of cysteine to 3-oxoalanine on target proteins. 3-oxoalanine modification, which is also named formylglycine (fGly), occurs in the maturation of arylsulfatases and some alkaline phosphatases that use the hydrated form of 3-oxoalanine as a catalytic nucleophile. This Thermomonospora curvata (strain ATCC 19995 / DSM 43183 / JCM 3096 / KCTC 9072 / NBRC 15933 / NCIMB 10081 / Henssen B9) protein is Formylglycine-generating enzyme.